Reading from the N-terminus, the 397-residue chain is Putative 3'(2'),5'-bisphosphate nucleotidase, mitochondrial (397 aa).

Residues 1-16 constitute a mitochondrion transit peptide; that stretch reads MYILDTGARFSAVRFS. Catalysis depends on Asp-91, which acts as the Proton acceptor. 4 residues coordinate Mg(2+): Glu-114, Asp-174, Ile-176, and Asp-177. The active-site Proton acceptor is Thr-179. Adenosine 3',5'-bisphosphate-binding residues include Thr-179, Ser-305, Lys-308, and Asp-334. AMP contacts are provided by Ser-305, Lys-308, and Asp-334. Residue Asp-334 participates in Mg(2+) binding.

The protein belongs to the inositol monophosphatase superfamily. It depends on Mg(2+) as a cofactor.

It is found in the mitochondrion. The catalysed reaction is 3'-phosphoadenylyl sulfate + H2O = adenosine 5'-phosphosulfate + phosphate. It catalyses the reaction adenosine 3',5'-bisphosphate + H2O = AMP + phosphate. It carries out the reaction adenosine 2',5'-bisphosphate + H2O = AMP + phosphate. Its function is as follows. Phosphatase that converts adenosine 3'-phosphate 5'-phosphosulfate (PAPS) to adenosine 5'-phosphosulfate (APS) and 3'(2')-phosphoadenosine 5'-phosphate (PAP) to AMP. The polypeptide is Putative 3'(2'),5'-bisphosphate nucleotidase, mitochondrial (Arabidopsis thaliana (Mouse-ear cress)).